Consider the following 394-residue polypeptide: Elongation factor Tu (394 aa).

The tr-type G domain maps to 10–204; the sequence is KPHVNVGTIG…ALDTYIPEPE (195 aa). The segment at 19–26 is G1; the sequence is GHVDHGKT. 19–26 contacts GTP; it reads GHVDHGKT. Thr-26 is a Mg(2+) binding site. Residues 60–64 are G2; the sequence is GITIN. The segment at 81-84 is G3; the sequence is DCPG. GTP-binding positions include 81 to 85 and 136 to 139; these read DCPGH and NKCD. Positions 136 to 139 are G4; it reads NKCD. The interval 174–176 is G5; it reads SAL.

This sequence belongs to the TRAFAC class translation factor GTPase superfamily. Classic translation factor GTPase family. EF-Tu/EF-1A subfamily. In terms of assembly, monomer.

The protein resides in the cytoplasm. It carries out the reaction GTP + H2O = GDP + phosphate + H(+). In terms of biological role, GTP hydrolase that promotes the GTP-dependent binding of aminoacyl-tRNA to the A-site of ribosomes during protein biosynthesis. This Shewanella halifaxensis (strain HAW-EB4) protein is Elongation factor Tu.